Here is a 255-residue protein sequence, read N- to C-terminus: NAD kinase (255 aa).

The Proton acceptor role is filled by aspartate 44. NAD(+) is bound by residues 44-45 (DG), histidine 49, 114-115 (NE), aspartate 144, alanine 152, 155-160 (SAYNLS), and glutamine 216.

The protein belongs to the NAD kinase family. It depends on a divalent metal cation as a cofactor.

The protein resides in the cytoplasm. It carries out the reaction NAD(+) + ATP = ADP + NADP(+) + H(+). Its function is as follows. Involved in the regulation of the intracellular balance of NAD and NADP, and is a key enzyme in the biosynthesis of NADP. Catalyzes specifically the phosphorylation on 2'-hydroxyl of the adenosine moiety of NAD to yield NADP. This is NAD kinase from Rickettsia typhi (strain ATCC VR-144 / Wilmington).